The primary structure comprises 412 residues: Peptidase T (412 aa).

His84 provides a ligand contact to Zn(2+). The active site involves Asp86. Asp146 contacts Zn(2+). The Proton acceptor role is filled by Glu179. Residues Glu180, Asp202, and His385 each contribute to the Zn(2+) site.

This sequence belongs to the peptidase M20B family. It depends on Zn(2+) as a cofactor.

Its subcellular location is the cytoplasm. The enzyme catalyses Release of the N-terminal residue from a tripeptide.. Its function is as follows. Cleaves the N-terminal amino acid of tripeptides. This Haemophilus influenzae (strain PittGG) protein is Peptidase T.